Here is a 421-residue protein sequence, read N- to C-terminus: Hemagglutinin-esterase (421 aa).

The N-terminal stretch at 1–16 (MFLLPRFILVSCIIGS) is a signal peptide. Residues 7–127 (FILVSCIIGS…SNDIWMQNKG (121 aa)) are esterase domain 1. Residues 17-392 (LGFDNPPTNV…PICVYDPLPL (376 aa)) lie on the Virion surface side of the membrane. Residue Ser40 is the Nucleophile of the active site. Cys44 and Cys65 are oxidised to a cystine. N-linked (GlcNAc...) asparagine; by host glycans are attached at residues Asn54, Asn89, Asn153, Asn236, and Asn301. Disulfide bonds link Cys113/Cys162, Cys197/Cys276, and Cys205/Cys249. Residues 128–266 (LFYTQVYKNM…GNYLAISNEL (139 aa)) form a receptor binding region. Residues 267–379 (LLTVPTKAIC…RCPTAADINT (113 aa)) are esterase domain 2. Residues Cys307 and Cys312 are joined by a disulfide bond. Residue Asn316 is glycosylated (N-linked (GlcNAc...) asparagine; by host). Active-site charge relay system residues include Asp326 and His329. Cys347 and Cys371 form a disulfide bridge. The N-linked (GlcNAc...) asparagine; by host glycan is linked to Asn358. The chain crosses the membrane as a helical span at residues 393-413 (ILLGILLGVAVIIIVVLLLYF). Topologically, residues 414–421 (MVENGTRL) are intravirion. An N-linked (GlcNAc...) asparagine; by host glycan is attached at Asn417.

This sequence belongs to the influenza type C/coronaviruses hemagglutinin-esterase family. In terms of assembly, homodimer; disulfide-linked. Forms a complex with the M protein in the pre-Golgi. Associates then with S-M complex to form a ternary complex S-M-HE. In terms of processing, N-glycosylated in the host RER.

The protein resides in the virion membrane. Its subcellular location is the host cell membrane. The catalysed reaction is N-acetyl-9-O-acetylneuraminate + H2O = N-acetylneuraminate + acetate + H(+). The enzyme catalyses N-acetyl-4-O-acetylneuraminate + H2O = N-acetylneuraminate + acetate + H(+). Structural protein that makes short spikes at the surface of the virus. Contains receptor binding and receptor-destroying activities. Mediates de-O-acetylation of N-acetyl-4-O-acetylneuraminic acid, which is probably the receptor determinant recognized by the virus on the surface of erythrocytes and susceptible cells. This receptor-destroying activity is important for virus release as it probably helps preventing self-aggregation and ensures the efficient spread of the progeny virus from cell to cell. May serve as a secondary viral attachment protein for initiating infection, the spike protein being the major one. May become a target for both the humoral and the cellular branches of the immune system. The chain is Hemagglutinin-esterase from Bos taurus (Bovine).